Reading from the N-terminus, the 396-residue chain is Subtilisin-like protease 5 (396 aa).

An N-terminal signal peptide occupies residues 1–20; it reads MTGFFTILSFSLAALSVTNA. Residues 21–116 constitute a propeptide that is removed on maturation; that stretch reads AQILSVPKGA…VEPDAIISQH (96 aa). Residues 37–113 form the Inhibitor I9 domain; the sequence is YIVVMKDDTS…VAFVEPDAII (77 aa). N63 is a glycosylation site (N-linked (GlcNAc...) asparagine). The region spanning 125 to 396 is the Peptidase S8 domain; that stretch reads PWGLSRLSNR…TRLLYNGSGR (272 aa). Residues D156 and H187 each act as charge relay system in the active site. N-linked (GlcNAc...) asparagine glycans are attached at residues N230 and N248. S342 (charge relay system) is an active-site residue. The segment covering 377–389 has biased composition (polar residues); it reads TIRNPGPDTTTRL. The tract at residues 377–396 is disordered; sequence TIRNPGPDTTTRLLYNGSGR. N392 is a glycosylation site (N-linked (GlcNAc...) asparagine).

Belongs to the peptidase S8 family.

The protein localises to the secreted. Functionally, secreted subtilisin-like serine protease with keratinolytic activity that contributes to pathogenicity. The polypeptide is Subtilisin-like protease 5 (SUB5) (Arthroderma benhamiae (Trichophyton mentagrophytes)).